A 258-amino-acid polypeptide reads, in one-letter code: UPF0246 protein HI_0984 (258 aa).

The protein belongs to the UPF0246 family.

In Haemophilus influenzae (strain ATCC 51907 / DSM 11121 / KW20 / Rd), this protein is UPF0246 protein HI_0984.